A 300-amino-acid polypeptide reads, in one-letter code: MTAFGVEPYGQPKYLEIAGKRMAYIDEGKGDAIVFQHGNPTSSYLWRNIMPHLEGLGRLVACDLIGMGASDKLSPSGPDRYSYGEQRDFLFALWDALDLGDHVVLVLHDWGSALGFDWANQHRDRVQGIAFMEAIVTPMTWADWPPAVRGVFQGFRSPQGEPMALEHNIFVERVLPGAILRQLSDEEMNHYRRPFVNGGEDRRPTLSWPRNLPIDGEPAEVVALVNEYRSWLEETDMPKLFINAEPGAIITGRIRDYVRSWPNQTEITVPGVHFVQEDSPEEIGAAIAQFVRRLRSAAGV.

Residues 32–155 enclose the AB hydrolase-1 domain; the sequence is AIVFQHGNPT…PAVRGVFQGF (124 aa). Asp-109 functions as the Nucleophile in the catalytic mechanism. Residue Glu-133 is the Proton donor of the active site. His-273 serves as the catalytic Proton acceptor.

Belongs to the haloalkane dehalogenase family. Type 2 subfamily. Monomer.

It catalyses the reaction 1-haloalkane + H2O = a halide anion + a primary alcohol + H(+). Catalyzes hydrolytic cleavage of carbon-halogen bonds in halogenated aliphatic compounds, leading to the formation of the corresponding primary alcohols, halide ions and protons. In Mycobacterium tuberculosis (strain ATCC 25177 / H37Ra), this protein is Haloalkane dehalogenase.